Here is a 468-residue protein sequence, read N- to C-terminus: MGTVHARSLDPLPMNGPDFGSPDDADLVEVEPQKKQEILENKDVVVQRVHFEGLGRTKDDLVAHEIGQVFKAKNLIEVMRKSHEAREKLLRLGVFRNVEVLIDTCEGEDAVPNGLDVTFEVTELRRVTGSYNTMVGNNEGSMVLGLKLPNLFGRAEKMTFQFSYGTKETSYGLSFFKPQVGNFERNFSVNLYKVTGQFPWSSLRETDRGVSAEINFPIWKTSHTLKWEGVWRELGCLARTASFTIREESGHTLKSSLSHSMVIDSRNASILPKSGALLKINQELAGYTGGDVSFLKEDFELQLNRQLTWDSVLSTSLWGGMLVPIGDRPSSIADRFYLGGPTSVRGFSMYSIGPQSEGDYLGGEAYWAGGVHLYTPLPFRPGRGGFGDLFRTHFFLNAGNLCNLNYGEGPGAHLRRLAECIRWSYGAGLVLRLGNIARLELNYCIPMGVQSGDRICDGVQFGAGIRFL.

Positions 1–24 are disordered; sequence MGTVHARSLDPLPMNGPDFGSPDD. Residues 44-124 enclose the POTRA domain; it reads VVVQRVHFEG…LDVTFEVTEL (81 aa).

Belongs to the SAM50/omp85 family. In terms of assembly, associates with the mitochondrial contact site and cristae organizing system (MICOS) complex (also known as MINOS or MitOS complex).

Its subcellular location is the mitochondrion outer membrane. Functionally, may play a role in the maintenance of the structure of mitochondrial cristae. The protein is Sorting and assembly machinery component 50 homolog A (samm50-a) of Xenopus laevis (African clawed frog).